The following is a 239-amino-acid chain: Ribonuclease HII (239 aa).

An RNase H type-2 domain is found at 18-231 (KIIVGLDEAG…SKNLLKEIEE (214 aa)). A divalent metal cation is bound by residues D24, E25, and D125.

It belongs to the RNase HII family. Mn(2+) serves as cofactor. Requires Mg(2+) as cofactor.

Its subcellular location is the cytoplasm. The enzyme catalyses Endonucleolytic cleavage to 5'-phosphomonoester.. Endonuclease that specifically degrades the RNA of RNA-DNA hybrids. The sequence is that of Ribonuclease HII from Methanococcus maripaludis (strain C7 / ATCC BAA-1331).